We begin with the raw amino-acid sequence, 242 residues long: 2-C-methyl-D-erythritol 4-phosphate cytidylyltransferase (242 aa).

The protein belongs to the IspD/TarI cytidylyltransferase family. IspD subfamily.

It catalyses the reaction 2-C-methyl-D-erythritol 4-phosphate + CTP + H(+) = 4-CDP-2-C-methyl-D-erythritol + diphosphate. Its pathway is isoprenoid biosynthesis; isopentenyl diphosphate biosynthesis via DXP pathway; isopentenyl diphosphate from 1-deoxy-D-xylulose 5-phosphate: step 2/6. Functionally, catalyzes the formation of 4-diphosphocytidyl-2-C-methyl-D-erythritol from CTP and 2-C-methyl-D-erythritol 4-phosphate (MEP). In Halorhodospira halophila (strain DSM 244 / SL1) (Ectothiorhodospira halophila (strain DSM 244 / SL1)), this protein is 2-C-methyl-D-erythritol 4-phosphate cytidylyltransferase.